The chain runs to 117 residues: Large ribosomal subunit protein bL20 (117 aa).

This sequence belongs to the bacterial ribosomal protein bL20 family.

Binds directly to 23S ribosomal RNA and is necessary for the in vitro assembly process of the 50S ribosomal subunit. It is not involved in the protein synthesizing functions of that subunit. In Vibrio cholerae serotype O1 (strain ATCC 39541 / Classical Ogawa 395 / O395), this protein is Large ribosomal subunit protein bL20.